A 927-amino-acid chain; its full sequence is Echinoderm microtubule-associated protein-like 4 (927 aa).

The tract at residues 1–189 (MDGFAGSLDD…IPSDVENYDD (189 aa)) is microtubule-binding. Residues 14–63 (AASTSDVQDRLSALELRVQQQEDEITVLKAALADVLRRLAISEDQVATVR) are a coiled coil. Positions 85–132 (NGGAGTRKPSHASSVAKKDTLSSAAKSVKRSSTLEKSHNSWDASEESR) are disordered. The segment covering 116-132 (STLEKSHNSWDASEESR) has biased composition (basic and acidic residues). WD repeat units follow at residues 199–237 (LKLEWVFGYRGRDCRANVYLLPTGEIVYFIASVVVLFNY), 241–288 (TQRH…VWDS), 296–336 (VIGL…VWDW), 343–378 (AEIKTTNEVVLAVEFHPTDAGTIVTCGKSHIFFWTW), 385–424 (RKQGIFGKYEKPKFVQCLAFLANGDVLAGDSGGIMLIWSK), 442–480 (QISKQIKAHDGSVFTLCQMRNGMLLTGGGKDRKVIMWDH), 485–521 (EREIEVPDQYGTIRAVAEGKGDQFLVGTSRNFILRGT), 524–563 (DGFQVEVQGHTDELWGLATHPFKDLLLTCAQDKQVCLWNS), 567–604 (SLEWTRVLDEPGHCADFHPTGTVVAIGTHSGRWFVLDA), 610–646 (VSIHTDGNEQLSVMRYSVDGALLAVGSHDNFIYLYNV), 653–692 (YSRYGKCTGHSSYITHLDWSPDNQYIMSNSGDYEILYWDI), 702–760 (RSEC…LFQY), and 767–806 (APSHKYSAHSSHVTNVSFTHNDGHLISTGGKDMSIMQWRL). Polar residues predominate over residues 815–829 (NDNIAESSSAVNSPV). Residues 815–927 (NDNIAESSSA…NQDDDDAPLS (113 aa)) are disordered. Residues 914 to 927 (AQDENQDDDDAPLS) show a composition bias toward acidic residues.

The protein belongs to the WD repeat EMAP family. In terms of assembly, homotrimer; self-association is mediated by the N-terminal coiled coil.

The protein resides in the cytoplasm. Its subcellular location is the cytoskeleton. It localises to the spindle. The protein localises to the microtubule organizing center. It is found in the midbody. Functionally, essential for the formation and stability of microtubules (MTs). Required for the organization of the mitotic spindle and for the proper attachment of kinetochores to MTs. Promotes the recruitment of NUDC to the mitotic spindle for mitotic progression. This is Echinoderm microtubule-associated protein-like 4 (eml4) from Xenopus laevis (African clawed frog).